We begin with the raw amino-acid sequence, 215 residues long: Probable GTP-binding protein EngB (215 aa).

In terms of domain architecture, EngB-type G spans Thr-30 to Glu-204. GTP-binding positions include Gly-38–Ser-45, Gly-65–Leu-69, Asp-83–Gly-86, Thr-150–Asp-153, and Phe-183–Ser-185. Positions 45 and 67 each coordinate Mg(2+).

The protein belongs to the TRAFAC class TrmE-Era-EngA-EngB-Septin-like GTPase superfamily. EngB GTPase family. Requires Mg(2+) as cofactor.

Necessary for normal cell division and for the maintenance of normal septation. The sequence is that of Probable GTP-binding protein EngB from Escherichia coli O1:K1 / APEC.